The primary structure comprises 332 residues: Receptor polysaccharide phosphotransferase WefC (332 aa).

The protein belongs to the stealth family.

The polypeptide is Receptor polysaccharide phosphotransferase WefC (wefC) (Streptococcus oralis).